The chain runs to 508 residues: Glutamyl-tRNA(Gln) amidotransferase subunit B, mitochondrial (508 aa).

This sequence belongs to the GatB/GatE family. GatB subfamily. As to quaternary structure, subunit of the heterotrimeric GatFAB amidotransferase (AdT) complex, composed of A, B and F subunits.

The protein resides in the mitochondrion. It carries out the reaction L-glutamyl-tRNA(Gln) + L-glutamine + ATP + H2O = L-glutaminyl-tRNA(Gln) + L-glutamate + ADP + phosphate + H(+). Its function is as follows. Allows the formation of correctly charged Gln-tRNA(Gln) through the transamidation of misacylated Glu-tRNA(Gln) in the mitochondria. The reaction takes place in the presence of glutamine and ATP through an activated gamma-phospho-Glu-tRNA(Gln). This Scheffersomyces stipitis (strain ATCC 58785 / CBS 6054 / NBRC 10063 / NRRL Y-11545) (Yeast) protein is Glutamyl-tRNA(Gln) amidotransferase subunit B, mitochondrial.